Here is a 591-residue protein sequence, read N- to C-terminus: L-fucose isomerase (591 aa).

Active-site proton acceptor residues include Glu337 and Asp361. Mn(2+)-binding residues include Glu337, Asp361, and His528.

The protein belongs to the L-fucose isomerase family. As to quaternary structure, homohexamer. Mn(2+) serves as cofactor.

It is found in the cytoplasm. It catalyses the reaction L-fucose = L-fuculose. Its pathway is carbohydrate degradation; L-fucose degradation; L-lactaldehyde and glycerone phosphate from L-fucose: step 1/3. In terms of biological role, converts the aldose L-fucose into the corresponding ketose L-fuculose. The protein is L-fucose isomerase of Escherichia coli O6:K15:H31 (strain 536 / UPEC).